Here is a 424-residue protein sequence, read N- to C-terminus: Probable biofilm formation methyltransferase WspC (424 aa).

The CheR-type methyltransferase domain occupies 1–263; the sequence is MNEQRFFRFL…IAQSFAYVRH (263 aa). Residues Thr68, Arg72, Glu109, Asp133, 187–188, and 206–207 each bind S-adenosyl-L-methionine; these read NV and RN. Residues 355-388 form a TPR repeat; sequence AQVYYWLGLLSDTEGDAQQALSHYRKALYLEPQH.

In terms of assembly, monomer. The TPR repeat does not mediate self-association.

Functionally, involved in biofilm formation. This is Probable biofilm formation methyltransferase WspC (wspC) from Pseudomonas putida (strain ATCC 47054 / DSM 6125 / CFBP 8728 / NCIMB 11950 / KT2440).